Reading from the N-terminus, the 157-residue chain is MEDLEEENFTLSVSSPKDAEFDSVVGHMEDIIMDDEFQLLQHGFMDKYYHEFEDTEENKLTYTTIFNEYIGLVEKFIEEQLLLRIPAFNMSAFISSLQCHREEIAGDIFDILLTFTDFLAFKEMFLDYKAEKEGRTVDLSCGLVVTPLIGSSVSSSS.

Belongs to the ARL2BP family.

It is found in the cytoplasm. The protein localises to the mitochondrion intermembrane space. Its subcellular location is the cytoskeleton. It localises to the microtubule organizing center. The protein resides in the centrosome. It is found in the nucleus. The protein localises to the spindle. Its subcellular location is the cilium basal body. Its function is as follows. Plays a role as an effector of the ADP-ribosylation factor-like protein 2, ARL2. The polypeptide is ADP-ribosylation factor-like protein 2-binding protein (arl2bp) (Xenopus tropicalis (Western clawed frog)).